The sequence spans 922 residues: Up-regulator of cell proliferation (922 aa).

The tract at residues 1–20 (MASSGHSDLGEVTSEIKASE) is disordered. Residue serine 3 is modified to Phosphoserine. A VLIG-type G domain is found at 680–920 (RSRLVVLSAL…NIQQLIELVR (241 aa)).

It belongs to the TRAFAC class dynamin-like GTPase superfamily. Very large inducible GTPase (VLIG) family.

Its subcellular location is the cytoplasm. The protein resides in the nucleus. Functionally, may be involved in cell cycle progression through the regulation of cyclin D1 expression. This is Up-regulator of cell proliferation (URGCP) from Bos taurus (Bovine).